The chain runs to 492 residues: MMSKIFDLVVIGAGSGGLEAAWNAATLYKKRVAVIDVQMVHGPPFFSALGGTCVNVGCVPKKLMVTGAQYMEHLRESAGFGWEFDRTTLRAEWKKLIAVKDEAVLNINKSYEEMFRDTEGLEFFLGWGSLESKNVVNVRESADPASAVKERLETENILLASGSWPHMPNIPGIEHCISSNEAFYLPEPPRRVLTVGGGFISVEFAGIFNAYKPKDGQVTLCYRGEMILRGFDHTLREELTKQLTANGIQILTKENPAKVELNADGSKSVTFESGKKMDFDLVMMAIGRSPRTKDLQLQNAGVMIKNGGVQVDEYSRTNVSNIYAIGDVTNRVMLTPVAINEAAALVDTVFGTNPRKTDHTRVASAVFSIPPIGTCGLIEEVASKRYEVVAVYLSSFTPLMHNISGSKYKTFVAKIITNHSDGTVLGVHLLGDNAPEIIQGVGICLKLNAKISDFYNTIGVHPTSAEELCSMRTPSYYYVKGEKMEKPSEASL.

Residue 36-52 (DVQMVHGPPFFSALGGT) participates in FAD binding. Residues cysteine 53 and cysteine 58 are joined by a disulfide bond. The active-site Proton acceptor is histidine 461.

It belongs to the class-I pyridine nucleotide-disulfide oxidoreductase family. In terms of assembly, homodimer. It depends on FAD as a cofactor.

The protein localises to the cytoplasm. The enzyme catalyses trypanothione + NADP(+) = trypanothione disulfide + NADPH + H(+). In terms of biological role, trypanothione is the parasite analog of glutathione; this enzyme is the equivalent of glutathione reductase. In Trypanosoma cruzi, this protein is Trypanothione reductase (TPR).